A 214-amino-acid chain; its full sequence is Ribosomal RNA small subunit methyltransferase G (214 aa).

Residues Gly-77, Leu-82, 128 to 129 (VE), and Arg-143 each bind S-adenosyl-L-methionine.

It belongs to the methyltransferase superfamily. RNA methyltransferase RsmG family.

It is found in the cytoplasm. The enzyme catalyses guanosine(527) in 16S rRNA + S-adenosyl-L-methionine = N(7)-methylguanosine(527) in 16S rRNA + S-adenosyl-L-homocysteine. Specifically methylates the N7 position of guanine in position 527 of 16S rRNA. The protein is Ribosomal RNA small subunit methyltransferase G of Nitrosococcus oceani (strain ATCC 19707 / BCRC 17464 / JCM 30415 / NCIMB 11848 / C-107).